Here is a 547-residue protein sequence, read N- to C-terminus: Dihydroxy-acid dehydratase (547 aa).

D78 provides a ligand contact to Mg(2+). Residue C119 coordinates [2Fe-2S] cluster. D120 and K121 together coordinate Mg(2+). K121 is modified (N6-carboxylysine). Residue C191 coordinates [2Fe-2S] cluster. E439 is a Mg(2+) binding site. The active-site Proton acceptor is S464.

It belongs to the IlvD/Edd family. As to quaternary structure, homodimer. Requires [2Fe-2S] cluster as cofactor. It depends on Mg(2+) as a cofactor.

It catalyses the reaction (2R)-2,3-dihydroxy-3-methylbutanoate = 3-methyl-2-oxobutanoate + H2O. The catalysed reaction is (2R,3R)-2,3-dihydroxy-3-methylpentanoate = (S)-3-methyl-2-oxopentanoate + H2O. It functions in the pathway amino-acid biosynthesis; L-isoleucine biosynthesis; L-isoleucine from 2-oxobutanoate: step 3/4. It participates in amino-acid biosynthesis; L-valine biosynthesis; L-valine from pyruvate: step 3/4. In terms of biological role, functions in the biosynthesis of branched-chain amino acids. Catalyzes the dehydration of (2R,3R)-2,3-dihydroxy-3-methylpentanoate (2,3-dihydroxy-3-methylvalerate) into 2-oxo-3-methylpentanoate (2-oxo-3-methylvalerate) and of (2R)-2,3-dihydroxy-3-methylbutanoate (2,3-dihydroxyisovalerate) into 2-oxo-3-methylbutanoate (2-oxoisovalerate), the penultimate precursor to L-isoleucine and L-valine, respectively. In Archaeoglobus fulgidus (strain ATCC 49558 / DSM 4304 / JCM 9628 / NBRC 100126 / VC-16), this protein is Dihydroxy-acid dehydratase.